The sequence spans 420 residues: Glutamyl-tRNA reductase (420 aa).

Substrate-binding positions include 49-52 (TCNR), Ser-107, 112-114 (EPQ), and Gln-118. The active-site Nucleophile is the Cys-50. 187–192 (GAGETI) is a binding site for NADP(+).

It belongs to the glutamyl-tRNA reductase family. Homodimer.

The catalysed reaction is (S)-4-amino-5-oxopentanoate + tRNA(Glu) + NADP(+) = L-glutamyl-tRNA(Glu) + NADPH + H(+). Its pathway is porphyrin-containing compound metabolism; protoporphyrin-IX biosynthesis; 5-aminolevulinate from L-glutamyl-tRNA(Glu): step 1/2. Functionally, catalyzes the NADPH-dependent reduction of glutamyl-tRNA(Glu) to glutamate 1-semialdehyde (GSA). The polypeptide is Glutamyl-tRNA reductase (Nitrosococcus oceani (strain ATCC 19707 / BCRC 17464 / JCM 30415 / NCIMB 11848 / C-107)).